Reading from the N-terminus, the 502-residue chain is Probable cytosol aminopeptidase (502 aa).

Positions 269 and 274 each coordinate Mn(2+). Lys281 is a catalytic residue. Mn(2+) is bound by residues Asp292, Asp351, and Glu353. The active site involves Arg355.

Belongs to the peptidase M17 family. The cofactor is Mn(2+).

The protein localises to the cytoplasm. The catalysed reaction is Release of an N-terminal amino acid, Xaa-|-Yaa-, in which Xaa is preferably Leu, but may be other amino acids including Pro although not Arg or Lys, and Yaa may be Pro. Amino acid amides and methyl esters are also readily hydrolyzed, but rates on arylamides are exceedingly low.. It catalyses the reaction Release of an N-terminal amino acid, preferentially leucine, but not glutamic or aspartic acids.. Functionally, presumably involved in the processing and regular turnover of intracellular proteins. Catalyzes the removal of unsubstituted N-terminal amino acids from various peptides. This is Probable cytosol aminopeptidase from Shewanella sediminis (strain HAW-EB3).